The sequence spans 227 residues: Deoxyribose-phosphate aldolase (227 aa).

Asp-96 functions as the Proton donor/acceptor in the catalytic mechanism. The active-site Schiff-base intermediate with acetaldehyde is Lys-158. Lys-187 acts as the Proton donor/acceptor in catalysis.

The protein belongs to the DeoC/FbaB aldolase family. DeoC type 1 subfamily.

It is found in the cytoplasm. The enzyme catalyses 2-deoxy-D-ribose 5-phosphate = D-glyceraldehyde 3-phosphate + acetaldehyde. It functions in the pathway carbohydrate degradation; 2-deoxy-D-ribose 1-phosphate degradation; D-glyceraldehyde 3-phosphate and acetaldehyde from 2-deoxy-alpha-D-ribose 1-phosphate: step 2/2. Its function is as follows. Catalyzes a reversible aldol reaction between acetaldehyde and D-glyceraldehyde 3-phosphate to generate 2-deoxy-D-ribose 5-phosphate. This chain is Deoxyribose-phosphate aldolase, found in Desulfotalea psychrophila (strain LSv54 / DSM 12343).